Reading from the N-terminus, the 685-residue chain is ATP-dependent RNA helicase MSS116, mitochondrial (685 aa).

Residues 1–34 (MLVLQRIPKRALQFNGVTGTVCSTRLFHHAFNLN) constitute a mitochondrion transit peptide. Residues 42–107 (SEERRYRNSN…NNGSRRRYQD (66 aa)) are disordered. Over residues 58 to 69 (SDSNSNNKYRNS) the composition is skewed to low complexity. Positions 70–86 (SYDDNRSRSNYGGDKRN) are enriched in basic and acidic residues. A compositionally biased stretch (low complexity) spans 88 to 99 (RNNNNYGNNRNN). The Q motif signature appears at 138 to 166 (SLLEESLLDANVHKAISAMKFESLTPVQQ). The Helicase ATP-binding domain maps to 170–357 (KPILTTENDV…ATIMNKKDCL (188 aa)). Residue 183–190 (AKTGTGKT) participates in ATP binding. A DEAD box motif is present at residues 298-301 (DEAD). The Helicase C-terminal domain maps to 386-542 (SMVALIQSIE…EDYLNQDKEN (157 aa)). The interval 633-685 (DREFDDEDRYTSRSQNNYKSKQSSKSNRFEGRNDYSNSRRSHANQKRNFTFDD) is disordered. Low complexity predominate over residues 644–658 (SRSQNNYKSKQSSKS).

This sequence belongs to the DEAD box helicase family. DDX18/HAS1 subfamily.

It is found in the mitochondrion matrix. The enzyme catalyses ATP + H2O = ADP + phosphate + H(+). ATP-dependent RNA helicase required for mitochondrial splicing of group I and II introns. Also required for efficient mitochondrial translation. The protein is ATP-dependent RNA helicase MSS116, mitochondrial (MSS116) of Kluyveromyces lactis (strain ATCC 8585 / CBS 2359 / DSM 70799 / NBRC 1267 / NRRL Y-1140 / WM37) (Yeast).